Here is a 223-residue protein sequence, read N- to C-terminus: Endonuclease NucS (223 aa).

This sequence belongs to the NucS endonuclease family.

The protein resides in the cytoplasm. In terms of biological role, cleaves both 3' and 5' ssDNA extremities of branched DNA structures. This is Endonuclease NucS from Streptomyces avermitilis (strain ATCC 31267 / DSM 46492 / JCM 5070 / NBRC 14893 / NCIMB 12804 / NRRL 8165 / MA-4680).